Here is a 540-residue protein sequence, read N- to C-terminus: Testis-specific chromodomain protein Y 1 (540 aa).

Residues 6 to 66 (FEVEAIVDKR…RQTEKQKKLT (61 aa)) enclose the Chromo domain. Residues 76-106 (NNARRRTSRSTKANYSKNSPKTPVTDKHHRS) are disordered. The span at 87-97 (KANYSKNSPKT) shows a compositional bias: polar residues.

Interacts (via chromo domain) with histone H3K9me3. As to expression, testis-specific. Detected in spermatids (at protein level).

It localises to the nucleus. The enzyme catalyses L-lysyl-[protein] + acetyl-CoA = N(6)-acetyl-L-lysyl-[protein] + CoA + H(+). Has histone acetyltransferase activity, with a preference for histone H4. The protein is Testis-specific chromodomain protein Y 1 (CDY1) of Homo sapiens (Human).